The chain runs to 349 residues: Phosphate acyltransferase (349 aa).

This sequence belongs to the PlsX family. In terms of assembly, homodimer. Probably interacts with PlsY.

Its subcellular location is the cytoplasm. The enzyme catalyses a fatty acyl-[ACP] + phosphate = an acyl phosphate + holo-[ACP]. It functions in the pathway lipid metabolism; phospholipid metabolism. Functionally, catalyzes the reversible formation of acyl-phosphate (acyl-PO(4)) from acyl-[acyl-carrier-protein] (acyl-ACP). This enzyme utilizes acyl-ACP as fatty acyl donor, but not acyl-CoA. The chain is Phosphate acyltransferase from Akkermansia muciniphila (strain ATCC BAA-835 / DSM 22959 / JCM 33894 / BCRC 81048 / CCUG 64013 / CIP 107961 / Muc).